A 58-amino-acid chain; its full sequence is Metallothionein-2B (58 aa).

Residues 1–29 (MPDPCCNDKCECKEGECKTGCKCKSCRCP) are beta. Positions 5, 6, 10, 12, 17, 21, 23, 26, 28, 31, 34, 38, 40, 46, 50, 54, 56, and 57 each coordinate a divalent metal cation. The tract at residues 30 to 58 (PCDKCSSECKCTSKEECSKTCSKPCSCCP) is alpha.

This sequence belongs to the metallothionein superfamily. Type 3 family.

In terms of biological role, binds six divalent metal ions. Known to bind copper and cadmium. The sequence is that of Metallothionein-2B from Callinectes sapidus (Blue crab).